The chain runs to 121 residues: Large ribosomal subunit protein bL12 (121 aa).

The protein belongs to the bacterial ribosomal protein bL12 family. In terms of assembly, homodimer. Part of the ribosomal stalk of the 50S ribosomal subunit. Forms a multimeric L10(L12)X complex, where L10 forms an elongated spine to which 2 to 4 L12 dimers bind in a sequential fashion. Binds GTP-bound translation factors.

Functionally, forms part of the ribosomal stalk which helps the ribosome interact with GTP-bound translation factors. Is thus essential for accurate translation. This chain is Large ribosomal subunit protein bL12, found in Streptococcus suis (strain 98HAH33).